The following is a 92-amino-acid chain: Acylphosphatase (92 aa).

The cysteines at positions 5 and 49 are disulfide-linked. Residues 5-92 (CIIAWVYGRV…SGELTDFRIR (88 aa)) form the Acylphosphatase-like domain. Active-site residues include Arg20 and Asn38.

The protein belongs to the acylphosphatase family.

It catalyses the reaction an acyl phosphate + H2O = a carboxylate + phosphate + H(+). The protein is Acylphosphatase of Escherichia coli O157:H7.